Consider the following 201-residue polypeptide: Recombination protein RecR (201 aa).

The segment at 60 to 75 (CKSCGNIDTRNPCTVC) adopts a C4-type zinc-finger fold. One can recognise a Toprim domain in the interval 83–178 (SIIVVVADVA…KVTRLAHGVP (96 aa)).

It belongs to the RecR family.

In terms of biological role, may play a role in DNA repair. It seems to be involved in an RecBC-independent recombinational process of DNA repair. It may act with RecF and RecO. The chain is Recombination protein RecR from Rhodopseudomonas palustris (strain BisB5).